The chain runs to 444 residues: Ribulose bisphosphate carboxylase large chain (444 aa).

Lys-5 carries the N6,N6,N6-trimethyllysine modification. 2 residues coordinate substrate: Asn-114 and Thr-164. Lys-166 functions as the Proton acceptor in the catalytic mechanism. Lys-168 provides a ligand contact to substrate. Mg(2+) contacts are provided by Lys-192, Asp-194, and Glu-195. Lys-192 is modified (N6-carboxylysine). Catalysis depends on His-285, which acts as the Proton acceptor. Positions 286, 318, and 370 each coordinate substrate.

The protein belongs to the RuBisCO large chain family. Type I subfamily. As to quaternary structure, heterohexadecamer of 8 large chains and 8 small chains; disulfide-linked. The disulfide link is formed within the large subunit homodimers. It depends on Mg(2+) as a cofactor. Post-translationally, the disulfide bond which can form in the large chain dimeric partners within the hexadecamer appears to be associated with oxidative stress and protein turnover.

The protein localises to the plastid. It is found in the chloroplast. The catalysed reaction is 2 (2R)-3-phosphoglycerate + 2 H(+) = D-ribulose 1,5-bisphosphate + CO2 + H2O. It carries out the reaction D-ribulose 1,5-bisphosphate + O2 = 2-phosphoglycolate + (2R)-3-phosphoglycerate + 2 H(+). Its function is as follows. RuBisCO catalyzes two reactions: the carboxylation of D-ribulose 1,5-bisphosphate, the primary event in carbon dioxide fixation, as well as the oxidative fragmentation of the pentose substrate in the photorespiration process. Both reactions occur simultaneously and in competition at the same active site. The polypeptide is Ribulose bisphosphate carboxylase large chain (Ginkgo biloba (Ginkgo)).